Here is a 213-residue protein sequence, read N- to C-terminus: GTP cyclohydrolase 1 (213 aa).

3 residues coordinate Zn(2+): Cys104, His107, and Cys175.

It belongs to the GTP cyclohydrolase I family. In terms of assembly, homomer.

The enzyme catalyses GTP + H2O = 7,8-dihydroneopterin 3'-triphosphate + formate + H(+). It participates in cofactor biosynthesis; 7,8-dihydroneopterin triphosphate biosynthesis; 7,8-dihydroneopterin triphosphate from GTP: step 1/1. The sequence is that of GTP cyclohydrolase 1 from Brucella canis (strain ATCC 23365 / NCTC 10854 / RM-666).